A 435-amino-acid chain; its full sequence is GTPase Der (435 aa).

EngA-type G domains follow at residues Lys-4 to Asp-167 and Thr-175 to Ser-350. GTP-binding positions include Gly-10 to Ser-17, Asp-57 to Ile-61, Asn-119 to Asp-122, Gly-181 to Ser-188, Asp-228 to Ile-232, and Asn-293 to Asp-296. The KH-like domain occupies Val-351–Lys-435.

This sequence belongs to the TRAFAC class TrmE-Era-EngA-EngB-Septin-like GTPase superfamily. EngA (Der) GTPase family. In terms of assembly, associates with the 50S ribosomal subunit.

Functionally, GTPase that plays an essential role in the late steps of ribosome biogenesis. The chain is GTPase Der from Mycoplasma mycoides subsp. mycoides SC (strain CCUG 32753 / NCTC 10114 / PG1).